The sequence spans 1149 residues: Guanine nucleotide exchange factor DBS (1149 aa).

The CRAL-TRIO domain maps to 52 to 224; the sequence is AATASDEIMH…DLGGTLDYCH (173 aa). The Spectrin repeat unit spans residues 351–456; that stretch reads LQLRHFEQGF…VTRRRGLLSK (106 aa). 4 positions are modified to phosphoserine: Ser457, Ser462, Ser471, and Ser480. A coiled-coil region spans residues 503–529; it reads LETGAENKIQELNEIYKEYECILNQDL. The tract at residues 555–627 is disordered; sequence KKLAAKQTRP…RTSSTGEEEE (73 aa). The span at 583–594 shows a compositional bias: low complexity; the sequence is PGSWRSSENSSS. Over residues 607-616 the composition is skewed to basic and acidic residues; it reads AKSEMSEPRQ. Phosphoserine is present on Ser621. At Thr622 the chain carries Phosphothreonine. Positions 632-812 constitute a DH domain; that stretch reads LRRHVMNELL…LGILKAVNDS (181 aa). One can recognise a PH domain in the interval 841–950; it reads TDHKKGHTKV…IRKVLTSQLQ (110 aa). A disordered region spans residues 956–1033; the sequence is SQHRALEQSH…EAPEEDGGWS (78 aa). The segment covering 966 to 978 has biased composition (low complexity); the sequence is SLPLPTPSSTSPT. Phosphoserine occurs at positions 1033, 1034, 1041, and 1042. One can recognise an SH3 domain in the interval 1055–1116; the sequence is LVPGKYTVVM…PASSLSTLLG (62 aa).

This sequence belongs to the MCF2 family. As to quaternary structure, interacts with GTP-bound RAC1. Interacts with CDC42. Interacts with RHOA. Interacts with CCPG1, which results in specific inhibition of its exchange activity toward RHOA, but does not affect its activity on CDC42. Expressed at low levels in several hemopoietic cell lines and in thymus and spleen, and at higher levels in other tissues, particularly in brain.

The protein resides in the cytoplasm. Its subcellular location is the cell membrane. In terms of biological role, guanine nucleotide exchange factor that catalyzes guanine nucleotide exchange on RHOA and CDC42, and thereby contributes to the regulation of RHOA and CDC42 signaling pathways. Seems to lack activity with RAC1. Becomes activated and highly tumorigenic by truncation of the N-terminus. In Mus musculus (Mouse), this protein is Guanine nucleotide exchange factor DBS (Mcf2l).